Consider the following 479-residue polypeptide: Aspartyl/glutamyl-tRNA(Asn/Gln) amidotransferase subunit B (479 aa).

It belongs to the GatB/GatE family. GatB subfamily. Heterotrimer of A, B and C subunits.

The catalysed reaction is L-glutamyl-tRNA(Gln) + L-glutamine + ATP + H2O = L-glutaminyl-tRNA(Gln) + L-glutamate + ADP + phosphate + H(+). The enzyme catalyses L-aspartyl-tRNA(Asn) + L-glutamine + ATP + H2O = L-asparaginyl-tRNA(Asn) + L-glutamate + ADP + phosphate + 2 H(+). Functionally, allows the formation of correctly charged Asn-tRNA(Asn) or Gln-tRNA(Gln) through the transamidation of misacylated Asp-tRNA(Asn) or Glu-tRNA(Gln) in organisms which lack either or both of asparaginyl-tRNA or glutaminyl-tRNA synthetases. The reaction takes place in the presence of glutamine and ATP through an activated phospho-Asp-tRNA(Asn) or phospho-Glu-tRNA(Gln). The polypeptide is Aspartyl/glutamyl-tRNA(Asn/Gln) amidotransferase subunit B (Streptococcus uberis (strain ATCC BAA-854 / 0140J)).